Here is a 173-residue protein sequence, read N- to C-terminus: Superoxide dismutase [Cu-Zn] 2 (173 aa).

Positions 1-19 (MKRLSLAMVTLLACAGAQA) are cleaved as a signal peptide. Cu cation is bound by residues His-67, His-69, and His-92. An intrachain disulfide couples Cys-74 to Cys-169. Zn(2+) is bound by residues His-92, His-101, His-109, and Asp-112. His-147 is a binding site for Cu cation.

It belongs to the Cu-Zn superoxide dismutase family. As to quaternary structure, monomer. The cofactor is Cu cation. It depends on Zn(2+) as a cofactor.

It localises to the periplasm. The catalysed reaction is 2 superoxide + 2 H(+) = H2O2 + O2. Functionally, destroys radicals which are normally produced within the cells and which are toxic to biological systems. In Salmonella typhimurium (strain LT2 / SGSC1412 / ATCC 700720), this protein is Superoxide dismutase [Cu-Zn] 2 (sodC).